The following is a 332-amino-acid chain: UDP-N-acetylenolpyruvoylglucosamine reductase (332 aa).

Residues 55–221 form the FAD-binding PCMH-type domain; the sequence is VGGAADLYVA…TQATLQLAPG (167 aa). The active site involves R200. The Proton donor role is filled by S251. E321 is a catalytic residue.

It belongs to the MurB family. The cofactor is FAD.

It localises to the cytoplasm. The enzyme catalyses UDP-N-acetyl-alpha-D-muramate + NADP(+) = UDP-N-acetyl-3-O-(1-carboxyvinyl)-alpha-D-glucosamine + NADPH + H(+). Its pathway is cell wall biogenesis; peptidoglycan biosynthesis. Functionally, cell wall formation. This is UDP-N-acetylenolpyruvoylglucosamine reductase from Nostoc punctiforme (strain ATCC 29133 / PCC 73102).